The sequence spans 991 residues: Transcription factor ROB1 (991 aa).

The zn(2)-C6 fungal-type DNA-binding region spans 17 to 43 (CTVCRTIKRKCDGNTPCSNCLKRNQEC). Disordered stretches follow at residues 150 to 188 (LNQQQQQQQPSPQSLSQSSASEVSTRSSPASPNSTISLA), 792 to 875 (FYAQ…EDNP), and 901 to 959 (QEEG…PQLP). Residues 152–168 (QQQQQQQPSPQSLSQSS) are compositionally biased toward low complexity. Residues 169-187 (ASEVSTRSSPASPNSTISL) are compositionally biased toward polar residues. Over residues 795-806 (QQQQQQQQQQQQ) the composition is skewed to low complexity. Basic and acidic residues-rich tracts occupy residues 807 to 817 (PKHEYHDHQQE) and 825 to 855 (QEEHSEKDIKIEIKDEPQPQEEHIHQDYPMK). Low complexity predominate over residues 907–931 (QQQQQQQQEQVQQEQVQQEQVQQDQ).

It localises to the nucleus. Transcription factor that mediates conventional biofilm formation and plays a key role in microcolony formation under both flow and static conditions and to epithelial surfaces. Modulates infection of mammalian hosts. The sequence is that of Transcription factor ROB1 from Candida albicans (strain SC5314 / ATCC MYA-2876) (Yeast).